Here is a 219-residue protein sequence, read N- to C-terminus: Probable transcription factor At1g55950 (219 aa).

Positions 9–77 (ASHSLKSLMA…DEKMETEEEG (69 aa)) are disordered. Basic residues predominate over residues 17–30 (MAKKNKRSQQKNKC). A compositionally biased stretch (basic and acidic residues) spans 31 to 48 (LKPEKDPSTVKRLLEDPP). Acidic residues predominate over residues 65-77 (YGDDEKMETEEEG).

It belongs to the GeBP family.

This chain is Probable transcription factor At1g55950, found in Arabidopsis thaliana (Mouse-ear cress).